Consider the following 403-residue polypeptide: Peroxisomal membrane protein PEX13 (403 aa).

Pro residues predominate over residues 1 to 11 (MASQPPPPPKP). The segment at 1–69 (MASQPPPPPK…SQQTGSGNLN (69 aa)) is disordered. Residues 1–134 (MASQPPPPPK…SSRGAFQSIE (134 aa)) are Peroxisomal matrix-facing. Residues 59-69 (PSQQTGSGNLN) are compositionally biased toward polar residues. The helical transmembrane segment at 135–155 (SIVHAFASVSMMMDATFSAVY) threads the bilayer. The targeting to peroxisomes stretch occupies residues 145-233 (MMMDATFSAV…EDRAANSAKS (89 aa)). Residues 156–174 (NSFRAVLDVANHFSRLKIH) are Cytoplasmic-facing. Residues 175–192 (FTKVFSAFALVRTIRYLY) form a helical membrane-spanning segment. The segment at 175-196 (FTKVFSAFALVRTIRYLYRRLQ) is interaction with PEX19. Residues 193-233 (RRLQWMIGLRRGLENEDLWAESEGTVACLGAEDRAANSAKS) lie on the Peroxisomal matrix side of the membrane. A helical transmembrane segment spans residues 234–254 (WPIFLFFAVILGGPYLIWKLL). The Cytoplasmic segment spans residues 255–403 (STHSDEVTDS…TGKNGDKQDL (149 aa)). An SH3 domain is found at 272-336 (DDHVVARAEY…PANYVKILGK (65 aa)). Ser354 carries the post-translational modification Phosphoserine.

The protein belongs to the peroxin-13 family. In terms of assembly, interacts (via SH3 domain) with PEX14 (via SH3-binding motif); forming the PEX13-PEX14 docking complex. Interacts with PEX19.

Its subcellular location is the peroxisome membrane. In terms of biological role, component of the PEX13-PEX14 docking complex, a translocon channel that specifically mediates the import of peroxisomal cargo proteins bound to PEX5 receptor. The PEX13-PEX14 docking complex forms a large import pore which can be opened to a diameter of about 9 nm. Mechanistically, PEX5 receptor along with cargo proteins associates with the PEX14 subunit of the PEX13-PEX14 docking complex in the cytosol, leading to the insertion of the receptor into the organelle membrane with the concomitant translocation of the cargo into the peroxisome matrix. Involved in the import of PTS1- and PTS2-type containing proteins. This is Peroxisomal membrane protein PEX13 (PEX13) from Bos taurus (Bovine).